The sequence spans 28 residues: Dolichyl-diphosphooligosaccharide--protein glycosyltransferase subunit 1 (28 aa).

Belongs to the OST1 family. In terms of assembly, component of the oligosaccharyltransferase (OST) complex.

It is found in the endoplasmic reticulum membrane. It participates in protein modification; protein glycosylation. Subunit of the oligosaccharyl transferase (OST) complex that catalyzes the initial transfer of a defined glycan (Glc(3)Man(9)GlcNAc(2) in eukaryotes) from the lipid carrier dolichol-pyrophosphate to an asparagine residue within an Asn-X-Ser/Thr consensus motif in nascent polypeptide chains, the first step in protein N-glycosylation. N-glycosylation occurs cotranslationally and the complex associates with the Sec61 complex at the channel-forming translocon complex that mediates protein translocation across the endoplasmic reticulum (ER). All subunits are required for a maximal enzyme activity. The chain is Dolichyl-diphosphooligosaccharide--protein glycosyltransferase subunit 1 from Gallus gallus (Chicken).